A 37-amino-acid chain; its full sequence is Potassium channel toxin alpha-KTx 15.1 (37 aa).

Gln1 carries the pyrrolidone carboxylic acid modification. 3 disulfides stabilise this stretch: Cys8/Cys28, Cys13/Cys33, and Cys17/Cys35.

The protein belongs to the short scorpion toxin superfamily. Potassium channel inhibitor family. Alpha-KTx 15 subfamily. Expressed by the venom gland.

Its subcellular location is the secreted. Its function is as follows. Blocker of voltage-gated potassium channels (600 nM of the toxin induces a block of 25% of hERG currents). May also inhibit Kv4/KCND when coexpressed with DPP6 or DPP10. In adult rat brain, it blocks the transient potassium channels in cerebellum granular cells. Blocks potassium channels by a simple 'plugging mechanism', in which a single toxin molecule finds a specific receptor site in the external vestibule of the potassium channel and thereby occludes the outer entry to the potassium conducting pore. The chain is Potassium channel toxin alpha-KTx 15.1 from Androctonus australis (Sahara scorpion).